The sequence spans 98 residues: NADH-ubiquinone oxidoreductase chain 4L (98 aa).

3 helical membrane-spanning segments follow: residues 1 to 21, 26 to 46, and 59 to 79; these read MASI…GVLI, LMST…MMTL, and APLI…ALLV.

This sequence belongs to the complex I subunit 4L family. As to quaternary structure, core subunit of respiratory chain NADH dehydrogenase (Complex I) which is composed of 45 different subunits.

Its subcellular location is the mitochondrion inner membrane. The enzyme catalyses a ubiquinone + NADH + 5 H(+)(in) = a ubiquinol + NAD(+) + 4 H(+)(out). In terms of biological role, core subunit of the mitochondrial membrane respiratory chain NADH dehydrogenase (Complex I) which catalyzes electron transfer from NADH through the respiratory chain, using ubiquinone as an electron acceptor. Part of the enzyme membrane arm which is embedded in the lipid bilayer and involved in proton translocation. The chain is NADH-ubiquinone oxidoreductase chain 4L (MT-ND4L) from Caenolestes fuliginosus (Shrew opossum).